The sequence spans 154 residues: Large ribosomal subunit protein uL15 (154 aa).

Positions Lys17–Val44 are disordered. The span at Arg21 to Val35 shows a compositional bias: gly residues.

The protein belongs to the universal ribosomal protein uL15 family. Part of the 50S ribosomal subunit.

In terms of biological role, binds to the 23S rRNA. This is Large ribosomal subunit protein uL15 from Bartonella henselae (strain ATCC 49882 / DSM 28221 / CCUG 30454 / Houston 1) (Rochalimaea henselae).